The sequence spans 228 residues: Translation initiation factor 6 (228 aa).

It belongs to the eIF-6 family.

Binds to the 50S ribosomal subunit and prevents its association with the 30S ribosomal subunit to form the 70S initiation complex. This is Translation initiation factor 6 from Thermococcus gammatolerans (strain DSM 15229 / JCM 11827 / EJ3).